We begin with the raw amino-acid sequence, 614 residues long: Probable glutamate--tRNA ligase, cytoplasmic (614 aa).

130 to 132 is an L-glutamate binding site; the sequence is RFA. Residues 135–144 carry the 'HIGH' region motif; that stretch reads PSGCLHIGHL. ATP is bound at residue His140. L-glutamate-binding positions include Asp166, 303-307, and Arg321; that span reads YDFVC. ATP is bound by residues Glu324 and 359 to 363; that span reads VLSKR. The short motif at 359–363 is the 'KMSKS' region element; the sequence is VLSKR.

This sequence belongs to the class-I aminoacyl-tRNA synthetase family. Glutamate--tRNA ligase type 2 subfamily.

It is found in the cytoplasm. It catalyses the reaction tRNA(Glu) + L-glutamate + ATP = L-glutamyl-tRNA(Glu) + AMP + diphosphate. In Vairimorpha ceranae (strain BRL01) (Microsporidian parasite), this protein is Probable glutamate--tRNA ligase, cytoplasmic.